Consider the following 206-residue polypeptide: Large ribosomal subunit protein uL22m (206 aa).

A mitochondrion-targeting transit peptide spans 1-40; it reads MAAALLRELGALWVPNLRIWTTQMLRVLPQSCIHTSTSLD.

Belongs to the universal ribosomal protein uL22 family. As to quaternary structure, component of the mitochondrial ribosome large subunit (39S) which comprises a 16S rRNA and about 50 distinct proteins.

It is found in the mitochondrion. This is Large ribosomal subunit protein uL22m (Mrpl22) from Rattus norvegicus (Rat).